The primary structure comprises 292 residues: Potassium channel, subfamily K, member 16 (292 aa).

Over 1–13 the chain is Cytoplasmic; the sequence is MPRAGVCGCWGGQ. A helical membrane pass occupies residues 14–34; it reads VLPLLLAYICYLLLGATIFQL. Residues 98–116 constitute an intramembrane region (pore-forming); sequence SFFFAGTVVTTIGYGNLAP. T108, I109, G110, and Y111 together coordinate K(+). The tract at residues 108-113 is selectivity filter 1; the sequence is TIGYGN. The chain crosses the membrane as a helical span at residues 120-140; that stretch reads AGQVFCVFYALMGIPLNVVFL. Topologically, residues 141–165 are cytoplasmic; the sequence is NHLGTGLRAHLTTLDRWEDHPRHSQ. The helical transmembrane segment at 166 to 186 threads the bilayer; it reads LLQVLGLALFLTLGTLVILIF. Residues 202-221 constitute an intramembrane region (pore-forming); that stretch reads GFYFAFITLSTIGFGDYVVG. Residues T212, I213, G214, and F215 each coordinate K(+). The interval 212 to 217 is selectivity filter 2; it reads TIGFGD. The chain crosses the membrane as a helical span at residues 238–258; the sequence is IWILLGLAWLAVVLSLGSLLL. Residues 259–292 are Cytoplasmic-facing; sequence HRCSRLWQLIRGLDLKDGAAPDSEPRSQKIPISA.

Belongs to the two pore domain potassium channel (TC 1.A.1.8) family. Homodimer; disulfide-linked. Heterodimer with KCNK17 and KCNK5. Expressed in pacreatic beta-cells (at protein level). Expressed in pacreatic delta-cells (at protein level).

It localises to the cell membrane. It is found in the endoplasmic reticulum membrane. The protein resides in the mitochondrion inner membrane. It carries out the reaction K(+)(in) = K(+)(out). It catalyses the reaction Rb(+)(in) = Rb(+)(out). The enzyme catalyses Cs(+)(in) = Cs(+)(out). K(+) channel that conducts voltage-dependent outward rectifying currents upon membrane depolarization. Voltage sensing is coupled to K(+) electrochemical gradient in an 'ion flux gating' mode where outward but not inward ion flow opens the gate. Homo- and heterodimerizes to form functional channels with distinct regulatory and gating properties. In pancreatic islets, conducts K(+) countercurrents for Ca(2+) release from the endoplasmic reticulum (ER) and regulates the frequency and duration of cytosolic Ca(2+) oscillations coupled to secretion of pancreatic hormones. In pancreatic beta cells, drives ER Ca(2+) efflux, which in turn activates Ca(2+)-dependent plasma membrane K(+) slow currents and cytosolic Ca(2+) influx, overall contributing to synchronous cytosolic Ca(2+) oscillations. Limits glucose-induced cytosolic Ca(2+) oscillations coupled to second-phase INS secretion. Contributes to beta cell adaptation to acute inflammation by maintaining normal cytosolic Ca(2+) levels and INS secretion. May regulate beta cell mitochondrial Ca(2+) levels either indirectly via ER Ca(2+) efflux or directly by hyperpolarizing the mitochondrial membrane potential. Limits mitochondrial Ca(2+) oscillations and ATP production involved in glucose homeostasis upon metabolic stress. In pancreatic delta cells, limits Ca(2+)-induced Ca(2+)-release involved in somatostatin secretion and modulates islet paracrine signaling involved in glucagon secretion. Permeable to other monovalent cations such as Rb(+) and Cs(+). The sequence is that of Potassium channel, subfamily K, member 16 from Mus musculus (Mouse).